A 282-amino-acid chain; its full sequence is Succinate dehydrogenase [ubiquinone] iron-sulfur subunit, mitochondrial (282 aa).

A mitochondrion-targeting transit peptide spans 1–30 (MAATVGVSLKRGFPAAVLGRVGLQFQACRG). In terms of domain architecture, 2Fe-2S ferredoxin-type spans 42–135 (KKFAIYRWDP…VSKIYPLPHM (94 aa)). Lys53 and Lys57 each carry N6-acetyllysine. 4 residues coordinate [2Fe-2S] cluster: Cys95, Cys100, Cys103, and Cys115. Positions 148 to 220 (FYAQYKSIEP…PAVLMQAYRW (73 aa)) are interaction with SDHAF1. The region spanning 178-208 (DREKLDGLYECILCACCSTSCPSYWWNGDKY) is the 4Fe-4S ferredoxin-type domain. Positions 188, 191, and 194 each coordinate [4Fe-4S] cluster. Position 198 (Cys198) interacts with [3Fe-4S] cluster. Position 203 (Trp203) interacts with a ubiquinone. Residues Cys245 and Cys251 each coordinate [3Fe-4S] cluster. [4Fe-4S] cluster is bound at residue Cys255.

The protein belongs to the succinate dehydrogenase/fumarate reductase iron-sulfur protein family. Component of complex II composed of four subunits: the flavoprotein (FP) SDHA, iron-sulfur protein (IP) SDHB, and a cytochrome b560 composed of SDHC and SDHD. Interacts with SDHAF1; the interaction is required for iron-sulfur cluster incorporation into SDHB. [2Fe-2S] cluster is required as a cofactor. It depends on [3Fe-4S] cluster as a cofactor. The cofactor is [4Fe-4S] cluster.

It is found in the mitochondrion inner membrane. It carries out the reaction a quinone + succinate = fumarate + a quinol. It catalyses the reaction (R)-malate + a quinone = enol-oxaloacetate + a quinol. The enzyme catalyses (S)-malate + a quinone = enol-oxaloacetate + a quinol. Its pathway is carbohydrate metabolism; tricarboxylic acid cycle; fumarate from succinate (eukaryal route): step 1/1. With respect to regulation, enol-oxaloacetate inhibits the succinate dehydrogenase activity. In terms of biological role, iron-sulfur protein (IP) subunit of the succinate dehydrogenase complex (mitochondrial respiratory chain complex II), responsible for transferring electrons from succinate to ubiquinone (coenzyme Q). SDH also oxidizes malate to the non-canonical enol form of oxaloacetate, enol-oxaloacetate. Enol-oxaloacetate, which is a potent inhibitor of the succinate dehydrogenase activity, is further isomerized into keto-oxaloacetate. This chain is Succinate dehydrogenase [ubiquinone] iron-sulfur subunit, mitochondrial (Sdhb), found in Mus musculus (Mouse).